A 278-amino-acid chain; its full sequence is Shikimate dehydrogenase (NADP(+)) (278 aa).

Shikimate-binding positions include 15-17 (SMS) and T62. The active-site Proton acceptor is the K66. E78 is an NADP(+) binding site. Residues N87 and D102 each coordinate shikimate. Residues 127 to 131 (GAGGA), 151 to 156 (NRTPEK), and I217 each bind NADP(+). Y219 is a binding site for shikimate. Residue G240 coordinates NADP(+).

It belongs to the shikimate dehydrogenase family. In terms of assembly, homodimer.

It carries out the reaction shikimate + NADP(+) = 3-dehydroshikimate + NADPH + H(+). Its pathway is metabolic intermediate biosynthesis; chorismate biosynthesis; chorismate from D-erythrose 4-phosphate and phosphoenolpyruvate: step 4/7. Involved in the biosynthesis of the chorismate, which leads to the biosynthesis of aromatic amino acids. Catalyzes the reversible NADPH linked reduction of 3-dehydroshikimate (DHSA) to yield shikimate (SA). The sequence is that of Shikimate dehydrogenase (NADP(+)) from Bacillus licheniformis (strain ATCC 14580 / DSM 13 / JCM 2505 / CCUG 7422 / NBRC 12200 / NCIMB 9375 / NCTC 10341 / NRRL NRS-1264 / Gibson 46).